Reading from the N-terminus, the 472-residue chain is Doublesex- and mab-3-related transcription factor 3 (472 aa).

The DM DNA-binding region spans 29–76 (CARCRNHGVLSWLKGHKRYCRFKDCTCEKCILIIERQRVMAAQVALRR). Disordered stretches follow at residues 89–128 (DSLR…AELA) and 155–191 (EERL…GCFT). The segment covering 95-123 (PGPPPPGDAVAAPQPPPASQPSQPQPPRP) has biased composition (pro residues). The segment covering 155–179 (EERLGDGKSADNTEVFSDKDTDQRS) has biased composition (basic and acidic residues). Residues 249–284 (RPPLEVLKKIFPNQKPTVLELILKGCGGDLVSAVEV) form the DMA domain. The tract at residues 430-472 (TEDPRISIPDDGCPFVSKQSIYTEDDYDERSDSSDSRTLNTSS) is disordered.

It belongs to the DMRT family. May homodimerize. As to expression, expressed in testis.

The protein resides in the nucleus. Functionally, probable transcription factor that plays a role in configuring the spinal circuits controlling stride in vertebrates. Involved in neuronal specification within specific subdivision of spinal cord neurons and in the development of a coordinated locomotor network controlling limb movements. May regulate transcription during sexual development. This Homo sapiens (Human) protein is Doublesex- and mab-3-related transcription factor 3 (DMRT3).